We begin with the raw amino-acid sequence, 94 residues long: Aspartyl/glutamyl-tRNA(Asn/Gln) amidotransferase subunit C (94 aa).

This sequence belongs to the GatC family. Heterotrimer of A, B and C subunits.

The enzyme catalyses L-glutamyl-tRNA(Gln) + L-glutamine + ATP + H2O = L-glutaminyl-tRNA(Gln) + L-glutamate + ADP + phosphate + H(+). It catalyses the reaction L-aspartyl-tRNA(Asn) + L-glutamine + ATP + H2O = L-asparaginyl-tRNA(Asn) + L-glutamate + ADP + phosphate + 2 H(+). Functionally, allows the formation of correctly charged Asn-tRNA(Asn) or Gln-tRNA(Gln) through the transamidation of misacylated Asp-tRNA(Asn) or Glu-tRNA(Gln) in organisms which lack either or both of asparaginyl-tRNA or glutaminyl-tRNA synthetases. The reaction takes place in the presence of glutamine and ATP through an activated phospho-Asp-tRNA(Asn) or phospho-Glu-tRNA(Gln). This Caldicellulosiruptor bescii (strain ATCC BAA-1888 / DSM 6725 / KCTC 15123 / Z-1320) (Anaerocellum thermophilum) protein is Aspartyl/glutamyl-tRNA(Asn/Gln) amidotransferase subunit C.